Here is a 545-residue protein sequence, read N- to C-terminus: CTP synthase (545 aa).

Residues 1–267 (MTKFIFVTGG…AEQVLNLLQM (267 aa)) are amidoligase domain. S13 is a CTP binding site. UTP is bound at residue S13. Residues 14–19 (SIGKGI) and D71 each bind ATP. Mg(2+)-binding residues include D71 and E141. Residues 148–150 (DIE), 188–193 (KTKPTQ), and K224 each bind CTP. UTP is bound by residues 188–193 (KTKPTQ) and K224. The region spanning 292–534 (EIAIVGKYVQ…IQAAIALSLS (243 aa)) is the Glutamine amidotransferase type-1 domain. G354 provides a ligand contact to L-glutamine. Residue C381 is the Nucleophile; for glutamine hydrolysis of the active site. L-glutamine-binding positions include 382 to 385 (LGMQ), E405, and R462. Catalysis depends on residues H507 and E509.

Belongs to the CTP synthase family. As to quaternary structure, homotetramer.

The enzyme catalyses UTP + L-glutamine + ATP + H2O = CTP + L-glutamate + ADP + phosphate + 2 H(+). It catalyses the reaction L-glutamine + H2O = L-glutamate + NH4(+). It carries out the reaction UTP + NH4(+) + ATP = CTP + ADP + phosphate + 2 H(+). It functions in the pathway pyrimidine metabolism; CTP biosynthesis via de novo pathway; CTP from UDP: step 2/2. Allosterically activated by GTP, when glutamine is the substrate; GTP has no effect on the reaction when ammonia is the substrate. The allosteric effector GTP functions by stabilizing the protein conformation that binds the tetrahedral intermediate(s) formed during glutamine hydrolysis. Inhibited by the product CTP, via allosteric rather than competitive inhibition. In terms of biological role, catalyzes the ATP-dependent amination of UTP to CTP with either L-glutamine or ammonia as the source of nitrogen. Regulates intracellular CTP levels through interactions with the four ribonucleotide triphosphates. This chain is CTP synthase, found in Nostoc punctiforme (strain ATCC 29133 / PCC 73102).